Consider the following 142-residue polypeptide: MEIRVFRHDDFEEVITLWERCDLLRPWNDPEMDIERKLNHDPDLFLVAEVAGEVVGSIMGGYDGHRGAAYYLGVHPDYRGRGIANALISRLEKKLIARGCPKINLMVRGDNDAVISMYEKLEYEMQDSVLLLGKRLIEDQEY.

Positions 1–142 (MEIRVFRHDD…GKRLIEDQEY (142 aa)) constitute an N-acetyltransferase domain.

This sequence belongs to the acetyltransferase family. YpeA subfamily.

The protein is Acetyltransferase SG1711 of Sodalis glossinidius (strain morsitans).